The chain runs to 270 residues: Putative hydro-lyase Noca_0093 (270 aa).

It belongs to the D-glutamate cyclase family.

This chain is Putative hydro-lyase Noca_0093, found in Nocardioides sp. (strain ATCC BAA-499 / JS614).